The primary structure comprises 213 residues: MDTLWDISPPLSPATPVWPGDTPLSVERVWRMEAGSPVNVARLTLSPHTGAHCDAPLHYDADGAPIGAVPLDAYLGPCRVIHCVGAAPRVQPADVEAALDRVPPRVLLRTCAHASVERWDSDFCAVAPETIDLLAARGVKLIGIDTPSLDPQESKTMDAHHRVRAHRMAILEGIVLDDVPAGDYELIALPLKFTTLDASPVRAVLRALPGHSS.

Residue Trp18 participates in substrate binding. Positions 48, 52, and 54 each coordinate Zn(2+). The Proton donor/acceptor role is filled by His58. Zn(2+)-binding residues include His160 and Glu172.

It belongs to the Cyclase 1 superfamily. KynB family. Homodimer. Zn(2+) serves as cofactor.

It catalyses the reaction N-formyl-L-kynurenine + H2O = L-kynurenine + formate + H(+). It participates in amino-acid degradation; L-tryptophan degradation via kynurenine pathway; L-kynurenine from L-tryptophan: step 2/2. Catalyzes the hydrolysis of N-formyl-L-kynurenine to L-kynurenine, the second step in the kynurenine pathway of tryptophan degradation. In Burkholderia vietnamiensis (strain G4 / LMG 22486) (Burkholderia cepacia (strain R1808)), this protein is Kynurenine formamidase.